Here is a 641-residue protein sequence, read N- to C-terminus: Pumilio homolog 24 (641 aa).

The disordered stretch occupies residues 1–82 (MSSKGLKPQK…LTEARKKKRK (82 aa)). One can recognise a PUM-HD domain in the interval 9–404 (QKSTKRKDTD…RPLLQLLHPN (396 aa)). 2 stretches are compositionally biased toward basic and acidic residues: residues 14 to 27 (RKDT…DSLK) and 67 to 76 (RVQAKELTEA). Pumilio repeat units follow at residues 118-153 (KMKG…VLFT), 154-189 (ELQP…ACIS), 190-225 (SLRG…ELLA), 303-340 (QLLT…KIIK), and 341-378 (AMKE…IIVR). Residues 427–468 (MDKSETSSKTKDTDGNEIGEETKDEQEDTVAEHSDHEENVTA) form a disordered region. Residues 428–440 (DKSETSSKTKDTD) are compositionally biased toward basic and acidic residues. Over residues 441–455 (GNEIGEETKDEQEDT) the composition is skewed to acidic residues. Positions 456–468 (VAEHSDHEENVTA) are enriched in basic and acidic residues.

Its subcellular location is the nucleus. It localises to the nucleolus. In terms of biological role, sequence-specific RNA-binding protein that regulates translation and mRNA stability by binding the 3'-UTR of target mRNAs. This is Pumilio homolog 24 (APUM24) from Arabidopsis thaliana (Mouse-ear cress).